The chain runs to 360 residues: uncharacterized protein (360 aa).

This is an uncharacterized protein from Ostreid herpesvirus 1 (isolate France) (OsHV-1).